The primary structure comprises 619 residues: MGEPGGAEAAVSARLLELAADDNAAGLGELLAAWPSLADEPAPWYTPARGAEPLTPLMVAAVYGSVGCLDALLSPPYLVDPNRASASSLSTPLHLAAAGGSASAPAAVSRLLAAGADPALLDHLQRRASDLVALPPNSLPLKNHLLSLLGARKEWPPDPSLPDIKNGAYASDDFRMYSFKVRACSRAYSHDWTECPFVHPGENARRRDPRKYHYSCVPCPEFKKGAGCRRGDMCEYAHGVFESWLHPAQYRTRLCKDGVGCARRVCFFAHTPDELRPLYVSTGSAVPSPRGALEMAAAAAAMGMGLSSPGSSSFTPPLSPSAGGGGGGGGGSGGGGAWPQQPSVPALCLPGSAGNLHLSRLRTSLSARDMAVDELLAAAAAAADYDGLVASPASIRSARGKALVPSNLDELFSAELAAAAASRSPRYADQGGAAFSPTRKATVLNQFQLQQQHSLLSPRAAAVTPEPVSPMSSRLLAALAQREKMQQQTLRSMSSRDLGNAASLLVGSPVSSSMSKWGFPSGNPDWGADDEELGRLKRCSSFELRSGAANGNHEPDLSWVNTLVKEPTPEKMMTTTSAMDSIGILGQNTSRDHIVGGEDDTAGVISSWLEQLQLDEMVV.

ANK repeat units lie at residues 52–81 (EPLT…LVDP) and 88–120 (SLST…DPAL). C3H1-type zinc fingers lie at residues 213-241 (HYSC…HGVF) and 249-273 (QYRT…HTPD). The segment at 308–341 (SPGSSSFTPPLSPSAGGGGGGGGGSGGGGAWPQQ) is disordered. Residues 322 to 337 (AGGGGGGGGGSGGGGA) show a composition bias toward gly residues.

This chain is Zinc finger CCCH domain-containing protein 67, found in Oryza sativa subsp. japonica (Rice).